The primary structure comprises 283 residues: Lactoylglutathione lyase GLX1 (283 aa).

N-acetylalanine is present on alanine 2. 2 VOC domains span residues 17 to 141 (RFLH…LIQR) and 147 to 275 (PFCQ…LVDN). Zn(2+) is bound at residue histidine 20. Residue arginine 24 participates in substrate binding. Glutamate 71 provides a ligand contact to Zn(2+). 2 residues coordinate substrate: asparagine 75 and histidine 89. Positions 89, 137, and 150 each coordinate Zn(2+). Glutamate 137 functions as the Proton donor/acceptor in the catalytic mechanism. Substrate is bound by residues glutamine 150 and arginine 154. Residue glutamine 150 coordinates a divalent metal cation. Glutamate 201 is a Zn(2+) binding site. Glutamate 201 contributes to the a divalent metal cation binding site. Residue asparagine 205 participates in substrate binding. Glutamine 219 serves as a coordination point for a divalent metal cation. 251–252 (PL) contributes to the substrate binding site. Valine 271 lines the a divalent metal cation pocket.

Belongs to the glyoxalase I family. As to quaternary structure, homodimer. Zn(2+) is required as a cofactor. Post-translationally, phosphorylated by SnRK2.8.

The enzyme catalyses (R)-S-lactoylglutathione = methylglyoxal + glutathione. It functions in the pathway secondary metabolite metabolism; methylglyoxal degradation; (R)-lactate from methylglyoxal: step 1/2. Functionally, catalyzes the conversion of hemimercaptal, formed from methylglyoxal and glutathione, to S-lactoylglutathione. This Arabidopsis thaliana (Mouse-ear cress) protein is Lactoylglutathione lyase GLX1.